The primary structure comprises 874 residues: MTSERYNAREAEPRWQRQWDEKAIFATKNDDPRPKYYVLEMFPYPSGRIHIGHVRNYTLGDVLARFMRAKGFNVLHPMGWDAFGLPAENAAIERKVAPKAWTYDNIAAMKKQLRSIGLSLDWAREFATCDPSYYKHQQKMFLDFMQAGLVEREQRKVNWDPVDMTVLANEQVIDGRGWRSGAVVEQREMNQWVFKITKYSQELLDALDGLDRWPDKVRLMQRNWIGRSEGLLIRFALDPKTVPAGESELKIFTTRPDTLFGAKFMAISADHPLAQAAAAKNPELAAFIAEIKRIGTAQEAIDTAEKQGFDTGIRAVHPFDPSWTLPVYVANFVLMEYGTGAIFGCPAHDQRDLDFVNKYGLGNTPVVCPEGQDPASFVITDTAYDGDGRMINSRFLDGMTIAQAKDEVAKRLESEQRGGSPIGERQVNFRLRDWGISRQRYWGCPIPVIHCATCDVVPVPAGDLPVVLPDDVTFDKPGNALDHHPTWKHVTCPKCGGKATRETDTMDTFVDSSWYFARFTDPWNETAPTTPAVANRMMPVDQYIGGVEHAILHLLYSRFFTRAMKATGHVAMDEPFAGMFTQGMVVHETYQKADGTYVNPADVKIEVGGNGRRAVLTATGEDITIGPIEKMSKSKKNTVDPDDIIESYGADVARWFMLSDSPPDRDVIWSDERVQGAARFVQRLWRLVNESVAASAEAPSSRPANFSADALALRKAAHGALDKVTGGIERLHFNVCLAHIREFANALADVLAKPAKPAPDLAWATREAAGILVQLFSPMMPHLAEECWQVLGHSGLISEASWPQIERDLLVEDSMTLVVQVNGKKRGEVTVASNAQNPEIESAVLALDAVKVALDGKPVRKVIIVPKRIVNVVG.

The 'HIGH' region motif lies at 43–53; sequence PYPSGRIHIGH. The short motif at 630-634 is the 'KMSKS' region element; sequence KMSKS. Lys-633 provides a ligand contact to ATP.

Belongs to the class-I aminoacyl-tRNA synthetase family.

The protein resides in the cytoplasm. The catalysed reaction is tRNA(Leu) + L-leucine + ATP = L-leucyl-tRNA(Leu) + AMP + diphosphate. The protein is Leucine--tRNA ligase of Bradyrhizobium sp. (strain ORS 278).